The primary structure comprises 308 residues: Adult enhancer factor 1 (308 aa).

Disordered stretches follow at residues 50–94 and 123–143; these read AHMA…PLPF and QAAA…THLT. The span at 56–76 shows a compositional bias: low complexity; sequence QQQQQQQQQQQQQHHQQQQQQ. Pro residues predominate over residues 81-90; the sequence is PSVPPPPTEL. 4 C2H2-type zinc fingers span residues 184-206, 212-234, 240-262, and 268-290; these read FHCT…VKIH, YKCN…LKIH, YNCN…VKIH, and FECV…IKIH.

In terms of tissue distribution, found in all tissues examined including the ovary and the fat body.

The protein resides in the nucleus. In terms of biological role, transcriptional repressor that binds specifically to fat body-specific enhancers, namely the adult ADH enhancer (AAE) and the enhancer that controls yolk protein gene expression. This is Adult enhancer factor 1 (Aef1) from Drosophila melanogaster (Fruit fly).